A 240-amino-acid chain; its full sequence is MAPK-interacting and spindle-stabilizing protein-like (240 aa).

The disordered stretch occupies residues 1 to 240; it reads MSDEFSLADA…PMPGGPHSYH (240 aa). Position 2 is an N-acetylserine (Ser2). Phosphoserine is present on residues Ser2, Ser6, and Ser15. Over residues 16–26 the composition is skewed to polar residues; sequence PAKTSAVSNTK. A compositionally biased stretch (low complexity) spans 34–43; sequence WPGSNPWNNP. Pro residues-rich tracts occupy residues 44–66, 74–122, 159–185, and 193–202; these read SAPP…PFGP, SVPP…PELP, PNMP…PPVP, and AWGPPAPYPA.

The protein belongs to the MISS family.

The chain is MAPK-interacting and spindle-stabilizing protein-like (MAPK1IP1L) from Bos taurus (Bovine).